The sequence spans 322 residues: RNA-binding motif protein, X-linked 2 (322 aa).

Lysine 8 participates in a covalent cross-link: Glycyl lysine isopeptide (Lys-Gly) (interchain with G-Cter in SUMO2). In terms of domain architecture, RRM spans 36 to 114; it reads AWIFLGGLPY…RTIRVDHVSN (79 aa). A disordered region spans residues 134–322; sequence KGCGARTPSP…SSNPSDRWRH (189 aa). At threonine 140 the chain carries Phosphothreonine. The residue at position 149 (serine 149) is a Phosphoserine. Positions 155–171 are enriched in basic residues; the sequence is TKKHKKDKKEKKKKKKE. Phosphoserine is present on residues serine 186 and serine 188. The segment covering 195–223 has biased composition (basic and acidic residues); the sequence is KEKDDTGPKKHSSKNSERAQKSEPREGQK. At serine 232 the chain carries Phosphoserine. The span at 240–274 shows a compositional bias: basic and acidic residues; the sequence is RELKKEKPKHEHKSSSRREAREEKTRIRDRGRSSD. A Glycyl lysine isopeptide (Lys-Gly) (interchain with G-Cter in SUMO2) cross-link involves residue lysine 243. Position 272 is a phosphoserine (serine 272). Over residues 289–308 the composition is skewed to basic residues; that stretch reads YRSRSRSRDKSHRHKRARRS. At serine 314 the chain carries Phosphoserine.

This sequence belongs to the IST3 family. Part of the activated spliceosome B/catalytic step 1 spliceosome, one of the forms of the spliceosome which has a well-formed active site but still cannot catalyze the branching reaction and is composed of at least 52 proteins, the U2, U5 and U6 snRNAs and the pre-mRNA. Component of the minor spliceosome, which splices U12-type introns.

Its subcellular location is the nucleus. In terms of biological role, involved in pre-mRNA splicing as component of the activated spliceosome. As a component of the minor spliceosome, involved in the splicing of U12-type introns in pre-mRNAs. In Homo sapiens (Human), this protein is RNA-binding motif protein, X-linked 2 (RBMX2).